The following is a 124-amino-acid chain: uncharacterized protein (124 aa).

The next 3 membrane-spanning stretches (helical) occupy residues 13-33 (LIQI…VLQL), 43-63 (GLFW…PEFF), and 71-91 (GVGR…FYLI).

The protein to M.thermoautotrophicum MTH137.

It localises to the cell membrane. This is an uncharacterized protein from Methanocaldococcus jannaschii (strain ATCC 43067 / DSM 2661 / JAL-1 / JCM 10045 / NBRC 100440) (Methanococcus jannaschii).